The chain runs to 1031 residues: Protein translocase subunit SecA (1031 aa).

Residues Gln143, 161–165, and Asp662 contribute to the ATP site; that span reads GEGKT. Residues Cys1015, Cys1017, Cys1026, and Cys1027 each coordinate Zn(2+).

The protein belongs to the SecA family. In terms of assembly, monomer and homodimer. Part of the essential Sec protein translocation apparatus which comprises SecA, SecYEG and auxiliary proteins SecDF. Other proteins may also be involved. Requires Zn(2+) as cofactor.

It localises to the cell inner membrane. It is found in the cytoplasm. The enzyme catalyses ATP + H2O + cellular proteinSide 1 = ADP + phosphate + cellular proteinSide 2.. In terms of biological role, part of the Sec protein translocase complex. Interacts with the SecYEG preprotein conducting channel. Has a central role in coupling the hydrolysis of ATP to the transfer of proteins into and across the cell membrane, serving as an ATP-driven molecular motor driving the stepwise translocation of polypeptide chains across the membrane. The polypeptide is Protein translocase subunit SecA (Chlorobaculum tepidum (strain ATCC 49652 / DSM 12025 / NBRC 103806 / TLS) (Chlorobium tepidum)).